A 61-amino-acid polypeptide reads, in one-letter code: Metallothionein-2 (61 aa).

The residue at position 1 (Met-1) is an N-acetylmethionine. The beta stretch occupies residues 1-29 (MDPNCSCATDGSCSCAGSCKCKECKCTTC). 18 residues coordinate a divalent metal cation: Cys-5, Cys-7, Cys-13, Cys-15, Cys-19, Cys-21, Cys-24, Cys-26, Cys-29, Cys-33, Cys-34, Cys-36, Cys-37, Cys-41, Cys-44, Cys-48, Cys-50, and Cys-57. Positions 30-61 (KKSCCSCCPVGCAKCSQGCVCKEASDKCSCCA) are alpha. Phosphoserine is present on Ser-58. Residues Cys-59 and Cys-60 each contribute to the a divalent metal cation site.

The protein belongs to the metallothionein superfamily. Type 1 family.

Functionally, metallothioneins have a high content of cysteine residues that bind various heavy metals; these proteins are transcriptionally regulated by both heavy metals and glucocorticoids. The chain is Metallothionein-2 (MT2) from Cricetulus griseus (Chinese hamster).